The sequence spans 437 residues: Phosphoglucosamine mutase (437 aa).

S101 functions as the Phosphoserine intermediate in the catalytic mechanism. S101, D234, D236, and D238 together coordinate Mg(2+). A Phosphoserine modification is found at S101.

This sequence belongs to the phosphohexose mutase family. The cofactor is Mg(2+). Activated by phosphorylation.

It carries out the reaction alpha-D-glucosamine 1-phosphate = D-glucosamine 6-phosphate. In terms of biological role, catalyzes the conversion of glucosamine-6-phosphate to glucosamine-1-phosphate. The sequence is that of Phosphoglucosamine mutase from Thermus thermophilus (strain ATCC 27634 / DSM 579 / HB8).